The sequence spans 388 residues: Succinate--CoA ligase [ADP-forming] subunit beta (388 aa).

Residues lysine 46, 53–55, glutamate 99, cysteine 102, and glutamate 107 each bind ATP; that span reads GRG. Mg(2+)-binding residues include asparagine 199 and aspartate 213. Substrate is bound by residues asparagine 264 and 321–323; that span reads GIV.

This sequence belongs to the succinate/malate CoA ligase beta subunit family. Heterotetramer of two alpha and two beta subunits. Mg(2+) is required as a cofactor.

The enzyme catalyses succinate + ATP + CoA = succinyl-CoA + ADP + phosphate. It catalyses the reaction GTP + succinate + CoA = succinyl-CoA + GDP + phosphate. Its pathway is carbohydrate metabolism; tricarboxylic acid cycle; succinate from succinyl-CoA (ligase route): step 1/1. Succinyl-CoA synthetase functions in the citric acid cycle (TCA), coupling the hydrolysis of succinyl-CoA to the synthesis of either ATP or GTP and thus represents the only step of substrate-level phosphorylation in the TCA. The beta subunit provides nucleotide specificity of the enzyme and binds the substrate succinate, while the binding sites for coenzyme A and phosphate are found in the alpha subunit. The protein is Succinate--CoA ligase [ADP-forming] subunit beta of Actinobacillus pleuropneumoniae serotype 7 (strain AP76).